Reading from the N-terminus, the 507-residue chain is Peroxisomal membrane protein PEX14 (507 aa).

2 stretches are compositionally biased toward polar residues: residues 1–10 (MATHQQTQPP) and 32–48 (EVQQATIAQDPPTSVFK). A disordered region spans residues 1 to 52 (MATHQQTQPPSDFPALADENSQIPEATKPANEVQQATIAQDPPTSVFKNSEP). The Peroxisomal segment spans residues 1–152 (MATHQQTQPP…QAAFLSRFRW (152 aa)). Involved in interaction with PEX5 stretches follow at residues 58–65 (IQNAIKFL) and 78–97 (RRSFLERKGLTKEEIDEAFR). A helical transmembrane segment spans residues 153 to 173 (YHAILAVGVLAASGAGTAVFI). Residues 174-507 (KRSLIPRFKS…EQQHISQEGN (334 aa)) lie on the Cytoplasmic side of the membrane. Polar residues predominate over residues 288–302 (VTTARKPYTNGSNVD). Disordered stretches follow at residues 288 to 329 (VTTA…PKSY), 344 to 394 (NIRE…NPRS), 409 to 435 (ANQNETSTMEPAAFQRQRSWVPPQPPP), and 448 to 507 (PKPQ…QEGN). Positions 308-322 (ARSASPPAAPADSSA) are enriched in low complexity. The span at 378-394 (QDESSNGQWWQQKNPRS) shows a compositional bias: polar residues.

It belongs to the peroxin-14 family. Interacts with PEX13; forming the PEX13-PEX14 docking complex. Interacts with PEX5 (via WxxxF/Y motifs). In terms of tissue distribution, expressed in flowers, siliques, leaves and roots.

It is found in the peroxisome membrane. Functionally, component of the PEX13-PEX14 docking complex, a translocon channel that specifically mediates the import of peroxisomal cargo proteins bound to PEX5 receptor. The PEX13-PEX14 docking complex forms a large import pore which can be opened to a diameter of about 9 nm. Mechanistically, PEX5 receptor along with cargo proteins associates with the PEX14 subunit of the PEX13-PEX14 docking complex in the cytosol, leading to the insertion of the receptor into the organelle membrane with the concomitant translocation of the cargo into the peroxisome matrix. The protein is Peroxisomal membrane protein PEX14 of Arabidopsis thaliana (Mouse-ear cress).